A 118-amino-acid polypeptide reads, in one-letter code: Putative pterin-4-alpha-carbinolamine dehydratase (118 aa).

The protein belongs to the pterin-4-alpha-carbinolamine dehydratase family.

The enzyme catalyses (4aS,6R)-4a-hydroxy-L-erythro-5,6,7,8-tetrahydrobiopterin = (6R)-L-erythro-6,7-dihydrobiopterin + H2O. The chain is Putative pterin-4-alpha-carbinolamine dehydratase from Pseudomonas putida (strain GB-1).